The chain runs to 471 residues: ATP synthase subunit beta (471 aa).

154 to 161 (GGAGVGKT) provides a ligand contact to ATP.

This sequence belongs to the ATPase alpha/beta chains family. In terms of assembly, F-type ATPases have 2 components, CF(1) - the catalytic core - and CF(0) - the membrane proton channel. CF(1) has five subunits: alpha(3), beta(3), gamma(1), delta(1), epsilon(1). CF(0) has three main subunits: a(1), b(2) and c(9-12). The alpha and beta chains form an alternating ring which encloses part of the gamma chain. CF(1) is attached to CF(0) by a central stalk formed by the gamma and epsilon chains, while a peripheral stalk is formed by the delta and b chains.

The protein resides in the cell membrane. It carries out the reaction ATP + H2O + 4 H(+)(in) = ADP + phosphate + 5 H(+)(out). Its function is as follows. Produces ATP from ADP in the presence of a proton gradient across the membrane. The catalytic sites are hosted primarily by the beta subunits. This Mesomycoplasma hyopneumoniae (strain 7448) (Mycoplasma hyopneumoniae) protein is ATP synthase subunit beta.